The sequence spans 195 residues: Apoptosis-associated speck-like protein containing a CARD (195 aa).

The Pyrin domain occupies 1 to 91 (MGCTRDAILD…AEQLQETMSK (91 aa)). Glycyl lysine isopeptide (Lys-Gly) (interchain with G-Cter in ubiquitin) cross-links involve residues Lys55 and Lys174. Residues 107-195 (TAKPGLHFVD…PYLVDDLEQS (89 aa)) enclose the CARD domain. At Ser195 the chain carries Phosphoserine.

In terms of assembly, self-associates; enforced oligomerization induces apoptosis, NF-kappa-B regulation and interleukin-1 beta secretion. Homooligomers can form disk-like particles of approximately 12 nm diameter and approximately 1 nm height. Component of several inflammasomes containing one pattern recognition receptor/sensor, such as NLRP1, NLRP2, NLRP3, NLRP6, NLRC4, AIM2, MEFV or NOD2, and probably NLRC4 or NLRP12. Major component of the ASC pyroptosome, a 1-2 um supramolecular assembly (one per macrophage cell) which consists of oligomerized PYCARD dimers and CASP1. Interacts with CASP1 (precursor form); the interaction induces activation of CASP1 leading to the processing of interleukin-1 beta; PYCARD competes with RIPK2 for binding to CASP1. Interacts with NLRP3; the interaction requires the homooligomerization of NLRP3. Interacts with NLRP2, NLRC4, MEFV, CARD16, AIM2, NOD2, RIGI, RIPK2, PYDC1, PYDC2, NLRP10, CASP8, CHUK, IKBKB and BAX. Component of the AIM2 PANoptosome complex, a multiprotein complex that drives inflammatory cell death (PANoptosis). In terms of processing, phosphorylated. 'Lys-63'-linked polyubiquitination by TRAF3 is critical for speck formation and inflammasome activation. 'Lys-63'-linked deubiquitinated by USP50; a crucial step for NLRP3-mediated inflammasome activation. 'Lys-63'-linked polyubiquitination by PELI1 is also critical for speck formation and inflammasome activation. Deubiquitinated by USP3 that cleaves 'Lys-48'-linked ubiquitin chains and strengthens its stability by blocking proteasomal degradation.

It is found in the cytoplasm. It localises to the inflammasome. Its subcellular location is the endoplasmic reticulum. The protein localises to the mitochondrion. The protein resides in the nucleus. Functionally, functions as a key mediator in apoptosis and inflammation. Promotes caspase-mediated apoptosis involving predominantly caspase-8 and also caspase-9 in a probable cell type-specific manner. Involved in activation of the mitochondrial apoptotic pathway, promotes caspase-8-dependent proteolytic maturation of BID independently of FADD in certain cell types and also mediates mitochondrial translocation of BAX and activates BAX-dependent apoptosis coupled to activation of caspase-9, -2 and -3. Involved in innate immune response by acting as an integral adapter in the assembly of various inflammasomes (NLRP2, NLRP3, NLRP6 and AIM2) which recruit and activate caspase-1 leading to processing and secretion of pro-inflammatory cytokines. Caspase-1-dependent inflammation leads to macrophage pyroptosis, a form of cell death. The function as activating adapter in different types of inflammasomes is mediated by the pyrin and CARD domains and their homotypic interactions. Clustered PYCARD nucleates the formation of caspase-1 filaments through the interaction of their respective CARD domains, acting as a platform for of caspase-1 polymerization. In the NLRC4 inflammasomes seems not be required but facilitates the processing of procaspase-1. In cooperation with NOD2 involved in an inflammasome activated by bacterial muramyl dipeptide leading to caspase-1 activation. May be involved in RIGI-triggered pro-inflammatory responses and inflammasome activation. In collaboration with AIM2 which detects cytosolic double-stranded DNA may also be involved in a caspase-1-independent cell death that involves caspase-8. In adaptive immunity may be involved in maturation of dendritic cells to stimulate T-cell immunity and in cytoskeletal rearrangements coupled to chemotaxis and antigen uptake may be involved in post-transcriptional regulation of the guanine nucleotide exchange factor DOCK2; the latter function is proposed to involve the nuclear form. Also involved in transcriptional activation of cytokines and chemokines independent of the inflammasome; this function may involve AP-1, NF-kappa-B, MAPK and caspase-8 signaling pathways. For regulation of NF-kappa-B activating and inhibiting functions have been reported. Modulates NF-kappa-B induction at the level of the IKK complex by inhibiting kinase activity of CHUK and IKBK. Proposed to compete with RIPK2 for association with CASP1 thereby down-regulating CASP1-mediated RIPK2-dependent NF-kappa-B activation and activating interleukin-1 beta processing. Modulates host resistance to DNA virus infection, probably by inducing the cleavage of and inactivating CGAS in presence of cytoplasmic double-stranded DNA. The protein is Apoptosis-associated speck-like protein containing a CARD (PYCARD) of Bos taurus (Bovine).